A 1845-amino-acid chain; its full sequence is Proteasome adapter and scaffold protein ECM29 (1845 aa).

Ala2 bears the N-acetylalanine mark. HEAT repeat units follow at residues 28-65, 107-144, 162-205, 326-362, 387-426, 429-466, 469-507, 683-720, 721-759, 783-820, 829-868, 870-907, 931-969, 975-1012, 1013-1050, 1112-1149, 1152-1189, 1194-1231, 1243-1281, 1285-1323, 1348-1386, 1390-1427, 1517-1554, 1558-1595, 1605-1642, 1646-1683, and 1779-1822; these read TDEQ…LVHL, YPRL…LIPT, NLAE…QGSS, RDPV…YDGL, PEIK…VGKL, RMPH…LSMM, AYST…ASTV, YPEK…YSVV, VSTV…LGFT, TLPD…LGEI, PSEG…LGYF, VGDG…ITSA, AGAK…LLSL, THKE…LGLV, YELG…VVFQ, AGEQ…WNAL, DKSM…LNDL, PLDD…LKTL, KGAA…LVKI, AGAM…TEQE, LQYL…IVSL, CPQD…MGHL, SFGG…MASI, TSSL…IACV, KSVP…AADI, TKED…ENEK, and TYSS…LATM. A compositionally biased stretch (low complexity) spans 193–207; the sequence is QSRQNSSSAQGSSSN. The interval 193–217 is disordered; it reads QSRQNSSSAQGSSSNSGGGSGIPQP. The residue at position 830 (Ser830) is a Phosphoserine. The residue at position 836 (Thr836) is a Phosphothreonine. Lys1039 participates in a covalent cross-link: Glycyl lysine isopeptide (Lys-Gly) (interchain with G-Cter in SUMO1).

It belongs to the ECM29 family. In terms of assembly, non-stoichiometric component of the proteasome; associates with the 26S proteasome. Interacts (via N-terminus) with VPS11, VPS26A, VPS36, RAB11FIP4 and RABEP1. Interacts (via C-terminus) with DCTN1, DCTN2, KIF5B, MYH7, MYH10, MYO10 and ARF6.

The protein resides in the endoplasmic reticulum. It localises to the endoplasmic reticulum-Golgi intermediate compartment. It is found in the endosome. The protein localises to the cytoplasm. Its subcellular location is the cytoskeleton. The protein resides in the microtubule organizing center. It localises to the centrosome. It is found in the nucleus. The protein localises to the multivesicular body. Its subcellular location is the cytoplasmic vesicle. Functionally, adapter/scaffolding protein that binds to the 26S proteasome, motor proteins and other compartment specific proteins. May couple the proteasome to different compartments including endosome, endoplasmic reticulum and centrosome. May play a role in ERAD and other enhanced proteolysis. Promotes proteasome dissociation under oxidative stress. The polypeptide is Proteasome adapter and scaffold protein ECM29 (Homo sapiens (Human)).